The following is a 148-amino-acid chain: Large ribosomal subunit protein uL22 (148 aa).

It belongs to the universal ribosomal protein uL22 family. As to quaternary structure, part of the 50S ribosomal subunit.

This protein binds specifically to 23S rRNA. It makes multiple contacts with different domains of the 23S rRNA in the assembled 50S subunit and ribosome. Its function is as follows. The globular domain of the protein is located near the polypeptide exit tunnel on the outside of the subunit, while an extended beta-hairpin is found that lines the wall of the exit tunnel in the center of the 70S ribosome. In Thermoplasma volcanium (strain ATCC 51530 / DSM 4299 / JCM 9571 / NBRC 15438 / GSS1), this protein is Large ribosomal subunit protein uL22.